The primary structure comprises 471 residues: L-lysine 2,3-aminomutase (471 aa).

Positions 120 to 332 constitute a Radical SAM core domain; that stretch reads HRYPDRVLFL…GLRGHTSGYA (213 aa). [4Fe-4S] cluster contacts are provided by cysteine 134, cysteine 138, and cysteine 141. Lysine 346 carries the post-translational modification N6-(pyridoxal phosphate)lysine.

It belongs to the radical SAM superfamily. KamA family. In terms of assembly, homotetramer. The cofactor is [4Fe-4S] cluster. It depends on pyridoxal 5'-phosphate as a cofactor.

The enzyme catalyses L-lysine = (3S)-3,6-diaminohexanoate. It functions in the pathway amino-acid degradation; L-lysine degradation via acetate pathway. Its function is as follows. Catalyzes the interconversion of L-alpha-lysine and L-beta-lysine. This chain is L-lysine 2,3-aminomutase (kamA), found in Bacillus subtilis (strain 168).